Consider the following 325-residue polypeptide: Treponemal membrane protein B (325 aa).

The N-terminal stretch at Met-1–Ala-24 is a signal peptide. The stretch at Glu-159–Glu-166 is one EAARKAAE repeat. Residues Ala-167–Glu-189 form an ARKLEEQRIAAQKAQEERKRAEE repeat. The interval Ala-176 to Arg-224 is disordered. One copy of the EAARKAAE repeat lies at Glu-190–Glu-197. The stretch at Ala-198 to Glu-220 is one ARKLEEQRIAAQKAQEERKRAEE repeat. An EAARKAAE repeat occupies Glu-221–Glu-228. The EAARKAEE repeat unit spans residues Glu-229–Glu-236.

The protein to T.phagedenis TmpB.

Its subcellular location is the cell outer membrane. Tmp may serve as a porin or transport protein for large molecules. The sequence is that of Treponemal membrane protein B (tmpB) from Treponema pallidum (strain Nichols).